Consider the following 108-residue polypeptide: Large ribosomal subunit protein bL21c (108 aa).

It belongs to the bacterial ribosomal protein bL21 family. Part of the 50S ribosomal subunit.

It localises to the plastid. The protein localises to the chloroplast. In terms of biological role, this protein binds to 23S rRNA. This is Large ribosomal subunit protein bL21c from Cyanidium caldarium (Red alga).